The primary structure comprises 320 residues: Polycomb complex protein BMI-1-A (320 aa).

Residues 18-57 form an RING-type zinc finger; it reads CVLCGGYFIDATTIIECLHSFCKMCIVRYLETSKYCPICD. The Nuclear localization signal signature appears at 81 to 95; sequence KLVPGLFKNEMKRRR. The interval 234–320 is disordered; the sequence is ITHPQEGLNN…ALNGSSTSSG (87 aa). Positions 262–281 are enriched in low complexity; that stretch reads VPSTSSPLPSPSTLVQPSQP. Residues 285–304 show a composition bias toward polar residues; that stretch reads HISSPINGTTMTSPNRQFNF.

As to quaternary structure, component of a PRC1-like complex. Homodimer. Interacts with cbx2.

The protein resides in the nucleus. Its function is as follows. Component of a Polycomb group (PcG) multiprotein PRC1-like complex, a complex class required to maintain the transcriptionally repressive state of many genes, including Hox genes, throughout development. PcG PRC1 complex acts via chromatin remodeling and modification of histones; it mediates monoubiquitination of histone H2A 'Lys-119', rendering chromatin heritably changed in its expressibility. In the PRC1 complex, it is required to stimulate the E3 ubiquitin-protein ligase activity of rnf2. This chain is Polycomb complex protein BMI-1-A (bmi1a), found in Danio rerio (Zebrafish).